We begin with the raw amino-acid sequence, 489 residues long: NAC domain-containing protein 74 (489 aa).

Residues 9-159 form the NAC domain; that stretch reads LPPGFGFHPK…AYVLCRITKR (151 aa). Residues 108–165 mediate DNA binding; sequence IGTKKTLVFHEGRPPTGRRTEWIMHEYYIDERECQACPDMKDAYVLCRITKRNDWIPG. The segment covering 413 to 427 has biased composition (basic and acidic residues); sequence KNQAHDVASTKRSDA. Residues 413 to 435 are disordered; the sequence is KNQAHDVASTKRSDAGKPSTELS. Residues 456-476 form a helical membrane-spanning segment; the sequence is WNMILVAGFAIGVAVVALHIG.

In terms of tissue distribution, widely expressed.

It is found in the nucleus. Its subcellular location is the cell membrane. Functionally, transcription activator involved in heat and endoplasmic reticulum (ER) stress responses. Regulates the expression of genes involved in ER protein folding and heat stress-responsive genes. Binds directly to the promoter of BZIP74 and regulates its expression in response to heat stress. The sequence is that of NAC domain-containing protein 74 from Oryza sativa subsp. japonica (Rice).